A 455-amino-acid chain; its full sequence is Serine--tRNA ligase (455 aa).

Residue 252–254 coordinates L-serine; the sequence is TAE. ATP is bound by residues 283–285 and V299; that span reads RKE. E306 is an L-serine binding site. 370 to 373 is a binding site for ATP; it reads EVVS. T406 serves as a coordination point for L-serine.

The protein belongs to the class-II aminoacyl-tRNA synthetase family. Type-1 seryl-tRNA synthetase subfamily. Homodimer. The tRNA molecule binds across the dimer.

It localises to the cytoplasm. It carries out the reaction tRNA(Ser) + L-serine + ATP = L-seryl-tRNA(Ser) + AMP + diphosphate + H(+). The enzyme catalyses tRNA(Sec) + L-serine + ATP = L-seryl-tRNA(Sec) + AMP + diphosphate + H(+). The protein operates within aminoacyl-tRNA biosynthesis; selenocysteinyl-tRNA(Sec) biosynthesis; L-seryl-tRNA(Sec) from L-serine and tRNA(Sec): step 1/1. Catalyzes the attachment of serine to tRNA(Ser). Is also able to aminoacylate tRNA(Sec) with serine, to form the misacylated tRNA L-seryl-tRNA(Sec), which will be further converted into selenocysteinyl-tRNA(Sec). The sequence is that of Serine--tRNA ligase from Thermococcus kodakarensis (strain ATCC BAA-918 / JCM 12380 / KOD1) (Pyrococcus kodakaraensis (strain KOD1)).